The sequence spans 188 residues: MATIGMGDIKKGVRLELDGNPYKVTEFQHVKPGKGAAFVRVKIKNLKTGKVIEKTVHAGDKFEVPELEQKTMQYLYDDGEMLQFMDTTTFDQIGLTHEQVGKETFDFMIDGMEADILFHNGEAISVEIPQTVVLKIVETPPNFKGDSQGGKKPATLESGAVVQVPFHVLEGEMIKVDTVEGKYLEKAK.

Belongs to the elongation factor P family.

Its subcellular location is the cytoplasm. The protein operates within protein biosynthesis; polypeptide chain elongation. In terms of biological role, involved in peptide bond synthesis. Stimulates efficient translation and peptide-bond synthesis on native or reconstituted 70S ribosomes in vitro. Probably functions indirectly by altering the affinity of the ribosome for aminoacyl-tRNA, thus increasing their reactivity as acceptors for peptidyl transferase. This Sulfurovum sp. (strain NBC37-1) protein is Elongation factor P.